The following is a 198-amino-acid chain: uncharacterized protein (198 aa).

It localises to the cytoplasm. This is an uncharacterized protein from Saccharomyces cerevisiae (strain ATCC 204508 / S288c) (Baker's yeast).